A 433-amino-acid chain; its full sequence is Chitinase-like protein EN03 (433 aa).

The first 16 residues, 1 to 16 (MKLFIALVGLLALAKA), serve as a signal peptide directing secretion. The 411-residue stretch at 23-433 (SKVLCYYDSR…PILRAAKYRL (411 aa)) folds into the GH18 domain. Residues Cys-27 and Cys-54 are joined by a disulfide bond. Residue Asn-220 is glycosylated (N-linked (GlcNAc...) asparagine). The cysteines at positions 337 and 418 are disulfide-linked.

Belongs to the glycosyl hydrolase 18 family. IDGF subfamily.

Its subcellular location is the secreted. This is Chitinase-like protein EN03 from Bombyx mori (Silk moth).